A 185-amino-acid chain; its full sequence is 16S rRNA aminocarboxypropyltransferase (185 aa).

Positions 19, 69, 93, 108, and 112 each coordinate S-adenosyl-L-methionine.

Belongs to the TDD superfamily. TSR3 family.

Its subcellular location is the cytoplasm. It carries out the reaction an N(1)-methylpseudouridine in rRNA + S-adenosyl-L-methionine = N(1)-methyl-N(3)-[(3S)-3-amino-3-carboxypropyl]pseudouridine in rRNA + S-methyl-5'-thioadenosine + H(+). In terms of biological role, aminocarboxypropyltransferase that catalyzes the aminocarboxypropyl transfer on pseudouridine corresponding to position 914 in M.jannaschii 16S rRNA. It constitutes the last step in biosynthesis of the hypermodified N1-methyl-N3-(3-amino-3-carboxypropyl) pseudouridine (m1acp3-Psi). This Vulcanisaeta distributa (strain DSM 14429 / JCM 11212 / NBRC 100878 / IC-017) protein is 16S rRNA aminocarboxypropyltransferase.